Here is a 378-residue protein sequence, read N- to C-terminus: Glutamate 5-kinase (378 aa).

K19 contacts ATP. The substrate site is built by S60, D147, and N159. Residues S179–D180 and S221–K227 contribute to the ATP site. The PUA domain occupies K285 to R362.

This sequence belongs to the glutamate 5-kinase family.

It is found in the cytoplasm. The catalysed reaction is L-glutamate + ATP = L-glutamyl 5-phosphate + ADP. Its pathway is amino-acid biosynthesis; L-proline biosynthesis; L-glutamate 5-semialdehyde from L-glutamate: step 1/2. In terms of biological role, catalyzes the transfer of a phosphate group to glutamate to form L-glutamate 5-phosphate. The chain is Glutamate 5-kinase from Gluconobacter oxydans (strain 621H) (Gluconobacter suboxydans).